A 332-amino-acid chain; its full sequence is 2,3-diketo-L-gulonate reductase (332 aa).

Residue His-44 is the Proton donor of the active site. Residues 168–174 (ITMVDMS), 224–225 (WK), and 304–306 (GHE) each bind NAD(+).

Belongs to the LDH2/MDH2 oxidoreductase family. DlgD subfamily. Homodimer.

It is found in the cytoplasm. It carries out the reaction 3-dehydro-L-gulonate + NAD(+) = 2,3-dioxo-L-gulonate + NADH + H(+). The catalysed reaction is 3-dehydro-L-gulonate + NADP(+) = 2,3-dioxo-L-gulonate + NADPH + H(+). Catalyzes the reduction of 2,3-diketo-L-gulonate in the presence of NADH, to form 3-keto-L-gulonate. The chain is 2,3-diketo-L-gulonate reductase from Shigella boydii serotype 4 (strain Sb227).